The sequence spans 101 residues: Gibberellin-regulated protein 6 (101 aa).

Positions 1-23 (MAKLITSFLLLTILFTFVCLTMS) are cleaved as a signal peptide.

It belongs to the GASA family. Six disulfide bonds may be present.

The protein localises to the secreted. Gibberellin-regulated protein that may function in hormonal controlled steps of development such as seed germination, flowering and seed maturation. This is Gibberellin-regulated protein 6 (GASA6) from Arabidopsis thaliana (Mouse-ear cress).